A 397-amino-acid chain; its full sequence is Lysophospholipid transporter LplT (397 aa).

Residues 1-17 (MSESVHTNTSLWSKGMK) are Periplasmic-facing. The helical transmembrane segment at 18–38 (AVIVAQFLSAFGDNALLFATL) threads the bilayer. The Cytoplasmic segment spans residues 39-52 (ALLKAQFYPEWSQP). The helical transmembrane segment at 53–73 (ILQMVFVGAYILFAPFVGQVA) threads the bilayer. Over 74 to 90 (DSFAKGRVMMFANGLKL) the chain is Periplasmic. The helical transmembrane segment at 91 to 111 (LGAASICFGINPFLGYTLVGV) threads the bilayer. At 112-144 (GAAAYSPAKYGILGELTTGSKLVKANGLMEAST) the chain is on the cytoplasmic side. Residues 145 to 165 (IAAILLGSVAGGVLADWHVLV) traverse the membrane as a helical segment. A topological domain (periplasmic) is located at residue A166. The helical transmembrane segment at 167–187 (LAACALAYGGAVVANIYIPKL) threads the bilayer. Residues 188–226 (AAARPGQSWNLINMTRSFLNACTSLWCNGETRFSLVGTS) are Cytoplasmic-facing. A helical membrane pass occupies residues 227-247 (LFWGAGVTLRFLLVLWVPVAL). Over 248-256 (GITDNATPT) the chain is Periplasmic. A helical transmembrane segment spans residues 257–277 (YLNAMVAIGIVVGAGAAAKLV). The Cytoplasmic segment spans residues 278-280 (TLE). The chain crosses the membrane as a helical span at residues 281–301 (TVSRCMPAGILIGVVVLIFSL). At 302–304 (QHE) the chain is on the periplasmic side. Residues 305–325 (LLPAYALLMLIGVLGGFFVVP) traverse the membrane as a helical segment. At 326–343 (LNALLQERGKKSVGAGNA) the chain is on the cytoplasmic side. A helical transmembrane segment spans residues 344–364 (IAVQNLGENSAMLLMLGIYSL). Residues 365–366 (AV) are Periplasmic-facing. The helical transmembrane segment at 367–387 (MVGIPVVPIGIGFGALFALAI) threads the bilayer. Over 388 to 397 (TALWIWQRRH) the chain is Cytoplasmic.

This sequence belongs to the major facilitator superfamily. LplT (TC 2.A.1.42) family.

The protein resides in the cell inner membrane. Catalyzes the facilitated diffusion of 2-acyl-glycero-3-phosphoethanolamine (2-acyl-GPE) into the cell. This is Lysophospholipid transporter LplT from Shigella dysenteriae serotype 1 (strain Sd197).